Reading from the N-terminus, the 142-residue chain is Galectin-16 (142 aa).

The 133-residue stretch at 6-138 folds into the Galectin domain; sequence VPYKLPVSLS…DVSLDSVLVN (133 aa).

As to expression, predominantly and highly expressed in the placenta where it is localized mainly in the syncytiotrophoblast and in the endothelia of fetal vessels. Also detected in the amnion and chorionic trophoblasts in fetal membranes.

In terms of biological role, binds lactose with high affinity. Strong inducer of T-cell apoptosis. In Homo sapiens (Human), this protein is Galectin-16.